The chain runs to 94 residues: Pyrimidine/purine nucleoside phosphorylase (94 aa).

It belongs to the nucleoside phosphorylase PpnP family.

The enzyme catalyses a purine D-ribonucleoside + phosphate = a purine nucleobase + alpha-D-ribose 1-phosphate. It carries out the reaction adenosine + phosphate = alpha-D-ribose 1-phosphate + adenine. It catalyses the reaction cytidine + phosphate = cytosine + alpha-D-ribose 1-phosphate. The catalysed reaction is guanosine + phosphate = alpha-D-ribose 1-phosphate + guanine. The enzyme catalyses inosine + phosphate = alpha-D-ribose 1-phosphate + hypoxanthine. It carries out the reaction thymidine + phosphate = 2-deoxy-alpha-D-ribose 1-phosphate + thymine. It catalyses the reaction uridine + phosphate = alpha-D-ribose 1-phosphate + uracil. The catalysed reaction is xanthosine + phosphate = alpha-D-ribose 1-phosphate + xanthine. Functionally, catalyzes the phosphorolysis of diverse nucleosides, yielding D-ribose 1-phosphate and the respective free bases. Can use uridine, adenosine, guanosine, cytidine, thymidine, inosine and xanthosine as substrates. Also catalyzes the reverse reactions. The sequence is that of Pyrimidine/purine nucleoside phosphorylase from Vibrio parahaemolyticus serotype O3:K6 (strain RIMD 2210633).